Reading from the N-terminus, the 57-residue chain is Defensin-like protein 302 (57 aa).

Intrachain disulfides connect C19/C39, C26/C44, and C32/C46.

Belongs to the DEFL family.

This Arabidopsis thaliana (Mouse-ear cress) protein is Defensin-like protein 302.